The primary structure comprises 286 residues: Meteorin-like protein (286 aa).

Residues 1–20 form the signal peptide; it reads MLRRGLLSFFMVILIDRGTS. Cystine bridges form between C28-C51, C84-C120, C165-C235, C168-C259, and C178-C281. N-linked (GlcNAc...) asparagine glycosylation is present at N203.

It belongs to the meteorin family.

The protein resides in the secreted. Functionally, hormone induced following exercise or cold exposure that promotes energy expenditure. Induced either in the skeletal muscle after exercise or in adipose tissue following cold exposure and is present in the circulation. Able to stimulate energy expenditure associated with the browning of the white fat depots and improves glucose tolerance. The chain is Meteorin-like protein (metrnl) from Xenopus laevis (African clawed frog).